The primary structure comprises 247 residues: UDP-2,3-diacylglucosamine hydrolase (247 aa).

Asp8, His10, Asp41, Asn79, and His114 together coordinate Mn(2+). 79–80 (NR) contacts substrate. Positions 122, 160, 171, 174, and 202 each coordinate substrate. The Mn(2+) site is built by His202 and His204.

This sequence belongs to the LpxH family. Mn(2+) serves as cofactor.

It localises to the cell inner membrane. The enzyme catalyses UDP-2-N,3-O-bis[(3R)-3-hydroxytetradecanoyl]-alpha-D-glucosamine + H2O = 2-N,3-O-bis[(3R)-3-hydroxytetradecanoyl]-alpha-D-glucosaminyl 1-phosphate + UMP + 2 H(+). It functions in the pathway glycolipid biosynthesis; lipid IV(A) biosynthesis; lipid IV(A) from (3R)-3-hydroxytetradecanoyl-[acyl-carrier-protein] and UDP-N-acetyl-alpha-D-glucosamine: step 4/6. Its function is as follows. Hydrolyzes the pyrophosphate bond of UDP-2,3-diacylglucosamine to yield 2,3-diacylglucosamine 1-phosphate (lipid X) and UMP by catalyzing the attack of water at the alpha-P atom. Involved in the biosynthesis of lipid A, a phosphorylated glycolipid that anchors the lipopolysaccharide to the outer membrane of the cell. The polypeptide is UDP-2,3-diacylglucosamine hydrolase (Xanthomonas campestris pv. campestris (strain 8004)).